A 213-amino-acid chain; its full sequence is tRNA (guanine-N(7)-)-methyltransferase (213 aa).

S-adenosyl-L-methionine-binding residues include D44, E69, N96, and D119. Residue D119 is part of the active site. Residues K123 and D155 each contribute to the substrate site.

It belongs to the class I-like SAM-binding methyltransferase superfamily. TrmB family.

It catalyses the reaction guanosine(46) in tRNA + S-adenosyl-L-methionine = N(7)-methylguanosine(46) in tRNA + S-adenosyl-L-homocysteine. It functions in the pathway tRNA modification; N(7)-methylguanine-tRNA biosynthesis. Catalyzes the formation of N(7)-methylguanine at position 46 (m7G46) in tRNA. The chain is tRNA (guanine-N(7)-)-methyltransferase from Thermosynechococcus vestitus (strain NIES-2133 / IAM M-273 / BP-1).